Reading from the N-terminus, the 236-residue chain is Three prime repair exonuclease 2 (236 aa).

The Mg(2+) site is built by Asp14 and Glu16. Substrate is bound by residues Glu16–Ala17 and Tyr122. His188 acts as the Proton donor/acceptor in catalysis. Position 193 (Asp193) interacts with Mg(2+). Asp193 is a binding site for substrate.

Belongs to the exonuclease superfamily. TREX family. Homodimer. It depends on Mg(2+) as a cofactor.

It localises to the nucleus. The enzyme catalyses Exonucleolytic cleavage in the 3'- to 5'-direction to yield nucleoside 5'-phosphates.. Its function is as follows. Exonuclease with a preference for double-stranded DNA with mismatched 3' termini. May play a role in DNA repair. In Mus musculus (Mouse), this protein is Three prime repair exonuclease 2 (Trex2).